The chain runs to 74 residues: UPF0248 protein MK0350 (74 aa).

This sequence belongs to the UPF0248 family.

The sequence is that of UPF0248 protein MK0350 from Methanopyrus kandleri (strain AV19 / DSM 6324 / JCM 9639 / NBRC 100938).